Consider the following 564-residue polypeptide: Beta-N-acetylglucosaminidase/beta-glucosidase (564 aa).

Catalysis depends on Asp283, which acts as the Nucleophile.

Belongs to the glycosyl hydrolase 3 family.

It carries out the reaction Hydrolysis of terminal non-reducing N-acetyl-D-hexosamine residues in N-acetyl-beta-D-hexosaminides.. The catalysed reaction is Hydrolysis of terminal, non-reducing beta-D-glucosyl residues with release of beta-D-glucose.. Functionally, catalyzes the cleavage of beta-N-acetyl-D-glucosaminides and beta-D-glucosides. Might be involved in the degradation of glucuronic acid-containing glycosaminoglycans such as hyaluronic acid. This is Beta-N-acetylglucosaminidase/beta-glucosidase (nag3) from Cellulomonas fimi.